The primary structure comprises 456 residues: Bifunctional protein GlmU (456 aa).

The pyrophosphorylase stretch occupies residues 1 to 229 (MLNSAMSVVI…ISETDGVNNR (229 aa)). Residues 11 to 14 (LAAG), Lys25, Gln76, 81 to 82 (GT), 103 to 105 (YGD), Gly140, Glu154, Asn169, and Asn227 each bind UDP-N-acetyl-alpha-D-glucosamine. Asp105 lines the Mg(2+) pocket. A Mg(2+)-binding site is contributed by Asn227. The segment at 230–250 (LQLSRLERIYQAEQAEKLLLS) is linker. The interval 251 to 456 (GVMLRDPARF…QGWQRPVKKK (206 aa)) is N-acetyltransferase. UDP-N-acetyl-alpha-D-glucosamine is bound by residues Arg333 and Lys351. His363 functions as the Proton acceptor in the catalytic mechanism. UDP-N-acetyl-alpha-D-glucosamine-binding residues include Tyr366 and Asn377. Acetyl-CoA-binding positions include Ala380, 386–387 (NY), Ser405, Ala423, and Arg440.

The protein in the N-terminal section; belongs to the N-acetylglucosamine-1-phosphate uridyltransferase family. In the C-terminal section; belongs to the transferase hexapeptide repeat family. Homotrimer. It depends on Mg(2+) as a cofactor.

It localises to the cytoplasm. The catalysed reaction is alpha-D-glucosamine 1-phosphate + acetyl-CoA = N-acetyl-alpha-D-glucosamine 1-phosphate + CoA + H(+). It catalyses the reaction N-acetyl-alpha-D-glucosamine 1-phosphate + UTP + H(+) = UDP-N-acetyl-alpha-D-glucosamine + diphosphate. The protein operates within nucleotide-sugar biosynthesis; UDP-N-acetyl-alpha-D-glucosamine biosynthesis; N-acetyl-alpha-D-glucosamine 1-phosphate from alpha-D-glucosamine 6-phosphate (route II): step 2/2. It functions in the pathway nucleotide-sugar biosynthesis; UDP-N-acetyl-alpha-D-glucosamine biosynthesis; UDP-N-acetyl-alpha-D-glucosamine from N-acetyl-alpha-D-glucosamine 1-phosphate: step 1/1. It participates in bacterial outer membrane biogenesis; LPS lipid A biosynthesis. In terms of biological role, catalyzes the last two sequential reactions in the de novo biosynthetic pathway for UDP-N-acetylglucosamine (UDP-GlcNAc). The C-terminal domain catalyzes the transfer of acetyl group from acetyl coenzyme A to glucosamine-1-phosphate (GlcN-1-P) to produce N-acetylglucosamine-1-phosphate (GlcNAc-1-P), which is converted into UDP-GlcNAc by the transfer of uridine 5-monophosphate (from uridine 5-triphosphate), a reaction catalyzed by the N-terminal domain. The polypeptide is Bifunctional protein GlmU (Salmonella typhi).